The sequence spans 113 residues: Small ribosomal subunit protein bS6 (113 aa).

The protein belongs to the bacterial ribosomal protein bS6 family.

Its function is as follows. Binds together with bS18 to 16S ribosomal RNA. In Pseudoalteromonas translucida (strain TAC 125), this protein is Small ribosomal subunit protein bS6.